The chain runs to 365 residues: Donuts protein 1 (365 aa).

The tract at residues 28–49 (NSGLELPSQDYTNVEEKESSPK) is disordered. In terms of domain architecture, CUE spans 82–125 (EKLCVLKELKIAFPEVDDTLIKAILIASQGVLEPAFNSLLYYSS). Disordered stretches follow at residues 215-246 (HNTI…KGVN) and 286-335 (ESEE…YKSA). Residues 224–244 (SILKGKEKGKEEEKEKGEEKG) are compositionally biased toward basic and acidic residues. The segment covering 286-295 (ESEEEEEQDV) has biased composition (acidic residues). A compositionally biased stretch (basic and acidic residues) spans 315–331 (EAQRDSADRLPAKDDGG).

In terms of assembly, may interact directly with ADY3. Probable component of a spindle pole body (SPB) complex composed of ADY3, SSP1, DON1, MPC54, SPO21/MPC70, NUD1 and CNM67.

The protein resides in the prospore membrane. Its function is as follows. Involved in the pathway that organizes the prospore membrane (PSM) during sporulation. The chain is Donuts protein 1 (DON1) from Saccharomyces cerevisiae (strain ATCC 204508 / S288c) (Baker's yeast).